The chain runs to 448 residues: UDP-N-acetylmuramoylalanine--D-glutamate ligase (448 aa).

Position 116–122 (116–122) interacts with ATP; sequence GSNAKST.

The protein belongs to the MurCDEF family.

The protein resides in the cytoplasm. The catalysed reaction is UDP-N-acetyl-alpha-D-muramoyl-L-alanine + D-glutamate + ATP = UDP-N-acetyl-alpha-D-muramoyl-L-alanyl-D-glutamate + ADP + phosphate + H(+). Its pathway is cell wall biogenesis; peptidoglycan biosynthesis. Functionally, cell wall formation. Catalyzes the addition of glutamate to the nucleotide precursor UDP-N-acetylmuramoyl-L-alanine (UMA). In Pseudomonas fluorescens (strain Pf0-1), this protein is UDP-N-acetylmuramoylalanine--D-glutamate ligase.